The primary structure comprises 693 residues: MTSLQQQRVKYGPPHHIKRRPYHPILESLEFQTNQHLIQEYSLDIVNTLSQLESLTLVNPAMIDLQPEIQWFMRPFLLDFLIELHSSFKLQPTTLFLCLNIIDRYCAKRIVFKRHYQLVGCTALWIASKYEDKKSRVPTLKELTIMCRNAYDEEMFVQMEMHILSTLDWSIGHPTLEDCLQLAIDSNNLSNNTTNDIENKSVRPNRKSSISSAVTAVARFLCELSLYDKYFLSVPPSLIAITANLLSCSMLQIPHASITLKNLIEQEIINPQQKKQKKALSSNSSRTTTASYTHQNQSDVRHSSFDEDIDLDSGDEEDDDEDYIDEFYETNNYDDTNATTFDESISKSTTVNDENQPPQIHTPFLSGLDEDSILSIKKICLMLIIQLSKVTEVLSKKYENLGVIQVINNFHSNYKFIIQSIYENQELLLNTINDSTNNNEIDYKLIQSSEILLQFPKFDEYLTEDEDENVSTDDEANSQPQGYDGSGSDGNNQLFTPKSPNAFSSNSSLTLNNHPQSMVPVTPPSATSQYSLFSNKNNRTHESTSGLNSTCNTPTHISISSFAPPQPPPGSILKPKLTSINSTNSLKIKKLTSNSNSSNINIHHGHHNTKQEKRYSHISIGSNSSSKYDGFSPIKSISTNGSLITNNGSLITNNGSFTNIVNNTNSSSPLMNQQQQQQVTQSSLYQHHHQYHQ.

Residues Q273–S298 show a composition bias toward polar residues. Disordered stretches follow at residues Q273 to D320, D465 to S571, S595 to Y615, and N662 to Q693. 2 stretches are compositionally biased toward acidic residues: residues D306–D320 and D465–A476. Polar residues-rich tracts occupy residues D489 to Q516 and P524 to A563. A compositionally biased stretch (low complexity) spans S666–Y685.

The protein belongs to the cyclin family. Interacts with CDC28. The CDC28-CCN1 complex associates with septin CDC11 upon hyphal induction.

Functionally, G1/S-specific cyclin essential for the control of the cell cycle at the G1/S (start) transition and for maintenance of filamentous growth. Through binding to CDC28 controls the phosphorylation of CDC11 and SEC2 upon induction of filamentous growth. The protein is G1/S-specific cyclin CCN1 (CCN1) of Candida albicans (strain SC5314 / ATCC MYA-2876) (Yeast).